A 1001-amino-acid chain; its full sequence is Sarcoplasmic/endoplasmic reticulum calcium ATPase 1 (1001 aa).

Helical transmembrane passes span 49–69 (LWEL…LLAA), 90–110 (EPFV…WQER), 254–273 (DEFG…AVWL), and 296–313 (FKIA…GLPA). V304, A305, I307, and E309 together coordinate Ca(2+). D351 functions as the 4-aspartylphosphate intermediate in the catalytic mechanism. D351 and T353 together coordinate Mg(2+). Position 353 (T353) interacts with ATP. T441 carries the post-translational modification Phosphothreonine. Positions 442, 489, 515, and 560 each coordinate ATP. Position 569 is a phosphothreonine (T569). Phosphoserine is present on S581. The ATP site is built by T625, G626, D627, R678, and K684. A Mg(2+)-binding site is contributed by D703. N706 is a binding site for ATP. The next 3 membrane-spanning stretches (helical) occupy residues 758-777 (KQFI…CIFL), 788-808 (IPVQ…TALG), and 829-851 (ISGW…TVGA). Residues N768, E771, N796, T799, and D800 each coordinate Ca(2+). The interaction with PLN stretch occupies residues 788 to 808 (IPVQLLWVNLVTDGLPATALG). A disulfide bridge connects residues C876 and C888. 3 consecutive transmembrane segments (helical) span residues 898–917 (TMAL…NSLS), 931–949 (IWLL…LILY), and 965–985 (TQWL…EILK). E908 provides a ligand contact to Ca(2+). The interaction with PLN stretch occupies residues 932 to 943 (WLLGSICLSMSL).

It belongs to the cation transport ATPase (P-type) (TC 3.A.3) family. Type IIA subfamily. Interacts with sarcolipin (SLN). Interacts with phospholamban (PLN). Interacts with myoregulin (MRLN). Interacts with DWORF. Interacts with VMP1. Requires Mg(2+) as cofactor. As to expression, skeletal muscle, fast twitch muscle (type II) fibers.

The protein localises to the endoplasmic reticulum membrane. It localises to the sarcoplasmic reticulum membrane. It carries out the reaction Ca(2+)(in) + ATP + H2O = Ca(2+)(out) + ADP + phosphate + H(+). Its activity is regulated as follows. Inhibited by sarcolipin (SLN) and myoregulin (MRLN). Has also been shown to be reversibly inhibited by phospholamban (PLN) at low calcium concentrations in vitro. Dephosphorylated PLN decreases the apparent affinity of the ATPase for calcium and this inhibition is regulated by the phosphorylation of PLN in vitro. Enhanced by DWORF; DWORF increases activity by displacing sarcolipin (SLN), phospholamban (PLN) and myoregulin (MRLN). Key regulator of striated muscle performance by acting as the major Ca(2+) ATPase responsible for the reuptake of cytosolic Ca(2+) into the sarcoplasmic reticulum. Catalyzes the hydrolysis of ATP coupled with the translocation of calcium from the cytosol to the sarcoplasmic reticulum lumen. Contributes to calcium sequestration involved in muscular excitation/contraction. The protein is Sarcoplasmic/endoplasmic reticulum calcium ATPase 1 of Homo sapiens (Human).